A 681-amino-acid chain; its full sequence is SRSF protein kinase 2 (681 aa).

The tract at residues 1-63 (MSVNSEKSSS…EQEDPADYCK (63 aa)) is disordered. Over residues 22–41 (LVPPPPPPPPPPPLPDPAPP) the composition is skewed to pro residues. Residues 42 to 59 (EPEEEILGSDDEEQEDPA) show a composition bias toward acidic residues. Serine 50 bears the Phosphoserine mark. The region spanning 79-681 (YHVIRKLGWG…ECLRHPWLNS (603 aa)) is the Protein kinase domain. ATP contacts are provided by residues 85-93 (LGWGHFSTV) and lysine 108. Aspartate 212 serves as the catalytic Proton acceptor. Disordered regions lie at residues 237–270 (WQKA…KKKL), 302–452 (ENIT…PLFS), and 467–499 (GSPL…KTKT). 2 positions are modified to phosphothreonine: threonine 331 and threonine 332. Serine 378 carries the post-translational modification Phosphoserine. Acidic residues predominate over residues 395 to 419 (QLEDEEDDEDDCANPEEYNLDEPNA). Residues 421 to 431 (SDYTYSSSYEQ) are compositionally biased toward polar residues. The residue at position 468 (serine 468) is a Phosphoserine. Residue threonine 471 is modified to Phosphothreonine. A phosphoserine mark is found at serine 477, serine 479, and serine 483. A Phosphothreonine; by PKB/AKT1 modification is found at threonine 485. A phosphoserine mark is found at serine 487 and serine 490. Residue serine 581 is modified to Phosphoserine; by CK2.

Belongs to the protein kinase superfamily. CMGC Ser/Thr protein kinase family. Associates with U4/U6-U5 tri-small nuclear ribonucleoproteins (U4/U6-U5 tri-snRNPs). Interacts with PKB/AKT1 in a phosphorylation-dependent manner. The phosphorylated form (by PKB/AKT1) interacts with YWHAB and YWHAE. Interaction with YWHAB suppresses its cleavage by caspases and inhibits the release of its N-terminal pro-apoptotic fragment. Interacts with SFN. Interacts with ACIN1. Interacts with POLR2A/RNA polymerase II; the interaction occurs during the co-transcriptional formation of inappropriate R-loops. Mg(2+) is required as a cofactor. Phosphorylation at Thr-485 by PKB/AKT1 enhances its stimulatory activity in triggering cyclin-D1 (CCND1) expression and promoting apoptosis in neurons, which can be blocked by YWHAB. It also enhances its protein kinase activity toward ACIN1 and SRSF2, promotes its nuclear translocation and prevents its proteolytic cleavage. Post-translationally, proteolytically cleaved at Asp-137 and Asp-401 by caspase-3 during apoptotic cell death. Cleavage at Asp-137 which is the major site of cleavage, produces a small N-terminal fragment that translocates into nucleus and promotes VP16-induced apoptosis. In terms of tissue distribution, expressed in testes, lung and brain.

Its subcellular location is the cytoplasm. It localises to the nucleus. It is found in the nucleoplasm. The protein resides in the nucleus speckle. The protein localises to the chromosome. The catalysed reaction is L-seryl-[protein] + ATP = O-phospho-L-seryl-[protein] + ADP + H(+). The enzyme catalyses L-threonyl-[protein] + ATP = O-phospho-L-threonyl-[protein] + ADP + H(+). With respect to regulation, activated by phosphorylation on Ser-50 and Ser-581. Functionally, serine/arginine-rich protein-specific kinase which specifically phosphorylates its substrates at serine residues located in regions rich in arginine/serine dipeptides, known as RS domains and is involved in the phosphorylation of SR splicing factors and the regulation of splicing. Promotes neuronal apoptosis by up-regulating cyclin-D1 (CCND1) expression. This is done by the phosphorylation of SRSF2, leading to the suppression of p53/TP53 phosphorylation thereby relieving the repressive effect of p53/TP53 on cyclin-D1 (CCND1) expression. Phosphorylates ACIN1, and redistributes it from the nuclear speckles to the nucleoplasm, resulting in cyclin A1 but not cyclin A2 up-regulation. Plays an essential role in spliceosomal B complex formation via the phosphorylation of DDX23/PRP28. Probably by phosphorylating DDX23, leads to the suppression of incorrect R-loops formed during transcription; R-loops are composed of a DNA:RNA hybrid and the associated non-template single-stranded DNA. This chain is SRSF protein kinase 2, found in Mus musculus (Mouse).